Reading from the N-terminus, the 36-residue chain is uncharacterized protein (36 aa).

The protein localises to the mitochondrion. This is an uncharacterized protein from Saccharomyces cerevisiae (strain ATCC 204508 / S288c) (Baker's yeast).